Consider the following 172-residue polypeptide: NADH-ubiquinone oxidoreductase chain 6 (172 aa).

4 helical membrane-spanning segments follow: residues 1–21 (MNNY…GLAL), 38–58 (VGCL…VFLI), 86–106 (WLIL…ICVL), and 147–167 (CATW…FIII).

This sequence belongs to the complex I subunit 6 family. In terms of assembly, core subunit of respiratory chain NADH dehydrogenase (Complex I) which is composed of 45 different subunits.

It is found in the mitochondrion inner membrane. It catalyses the reaction a ubiquinone + NADH + 5 H(+)(in) = a ubiquinol + NAD(+) + 4 H(+)(out). Its function is as follows. Core subunit of the mitochondrial membrane respiratory chain NADH dehydrogenase (Complex I) which catalyzes electron transfer from NADH through the respiratory chain, using ubiquinone as an electron acceptor. Essential for the catalytic activity and assembly of complex I. This Mus musculus (Mouse) protein is NADH-ubiquinone oxidoreductase chain 6 (Mtnd6).